A 67-amino-acid polypeptide reads, in one-letter code: Vespin (67 aa).

The N-terminal stretch at 1–21 (MHPIIWELSHMVDLQAAAQKL) is a signal peptide.

As to expression, expressed by the venom gland.

The protein resides in the secreted. Its function is as follows. Shows contractile activity on isolated ileum smooth muscle. In Vespa magnifica (Hornet), this protein is Vespin.